Reading from the N-terminus, the 89-residue chain is Co-chaperonin GroES (89 aa).

The protein belongs to the GroES chaperonin family. As to quaternary structure, heptamer of 7 subunits arranged in a ring. Interacts with the chaperonin GroEL.

The protein resides in the cytoplasm. Functionally, together with the chaperonin GroEL, plays an essential role in assisting protein folding. The GroEL-GroES system forms a nano-cage that allows encapsulation of the non-native substrate proteins and provides a physical environment optimized to promote and accelerate protein folding. GroES binds to the apical surface of the GroEL ring, thereby capping the opening of the GroEL channel. The sequence is that of Co-chaperonin GroES from Parabacteroides distasonis (strain ATCC 8503 / DSM 20701 / CIP 104284 / JCM 5825 / NCTC 11152).